We begin with the raw amino-acid sequence, 510 residues long: ATP synthase subunit alpha (510 aa).

169 to 176 (GDRQTGKT) is a binding site for ATP.

This sequence belongs to the ATPase alpha/beta chains family. As to quaternary structure, F-type ATPases have 2 components, CF(1) - the catalytic core - and CF(0) - the membrane proton channel. CF(1) has five subunits: alpha(3), beta(3), gamma(1), delta(1), epsilon(1). CF(0) has four main subunits: a(1), b(1), b'(1) and c(9-12).

Its subcellular location is the cell inner membrane. The catalysed reaction is ATP + H2O + 4 H(+)(in) = ADP + phosphate + 5 H(+)(out). Functionally, produces ATP from ADP in the presence of a proton gradient across the membrane. The alpha chain is a regulatory subunit. The polypeptide is ATP synthase subunit alpha (Rhodospirillum rubrum (strain ATCC 11170 / ATH 1.1.1 / DSM 467 / LMG 4362 / NCIMB 8255 / S1)).